Reading from the N-terminus, the 197-residue chain is MSRLVQTMLLWLKSEKGFDTTEASDGPELQKSICDKRWSPCCTLVRLYARMGLHRYNLLKLSRVKKYNMSTHYAAFATTHRSNGKYHDLSDLKIFESSEDVEPPNEVSLNVINVIVYIVYKDFYESRLVRMLIAKLLLNEASMSIMDASLSRVEIRLSNPIWVWSDIYECPTQKLNDMSFSYIPETYLVIKIKSTKY.

This sequence belongs to the UPF0725 (EMB2204) family.

The chain is UPF0725 protein At5g41640 from Arabidopsis thaliana (Mouse-ear cress).